Here is a 728-residue protein sequence, read N- to C-terminus: MEDPQPLPQSELPLCDSLIIWLQTFKTASPCQDVKQLTNGVTMAQVLHQIDVAWFSESWLSRIKDDVGDNWRIKASNLKKVLHGITSYYHEFLGQQISEELIPDLNQITECADPVELGRLLQLILGCAVNCEKKQEHIKNIMTLEESVQHVVMTAIQELMSKEIVISPASDTVGELEQQLKRALEELQEAIAEKEELKQRCQELDMQVTTLQDEKNSLVSENEMMNEKLDQLDGSFDDPNTMVAKKYFHVQLQLEQLQEENYRLEAAKDDYRVHCEELEKQLIEFQHRNDELTSLAEETRALKDEIDVLRATSDKANKLESTVEVYRQKLQDLNDLRKQVKSLQETNMMYMHNTVSLEEELKKANAARAQLETYKRQVQDLHTKLSSESKRADTLAFEMKRLEEKHETLLKEKERLIEQRDTLKETNEELRCSKAQQDHLNQADASATKSYENLAAEIMPVEYREVFIRLQHENKMLRLQQEGTENERIEQLQEQLEQKHRKMNELETEQRLSKERIGELQQQIEDLQKSLQEQGSKSEGESSSKLKQKLEAHMEKLTEVHEELQKKQELIEDLQPDISQNAQKISELEAALQKKDEDMKAMEERYKMYLEKARNVIKTLDPKLNPASAEIMLLRKQLAEKERRIEILESECKVAKLRDYEEKLIVSAWYNKSLAFQKLGMESRLVSGASACKDSVAAAPARSFLAQQRHITNTRRNLSVKVPAAASD.

Met-1 bears the N-acetylmethionine mark. The sufficient for interaction with microtubules stretch occupies residues 1–555 (MEDPQPLPQS…LKQKLEAHME (555 aa)). A Calponin-homology (CH) domain is found at 12–128 (LPLCDSLIIW…RLLQLILGCA (117 aa)). Coiled-coil stretches lie at residues 168 to 443 (PASD…LNQA) and 477 to 658 (LRLQ…AKLR). Ser-235 is subject to Phosphoserine. A disordered region spans residues 481–510 (QEGTENERIEQLQEQLEQKHRKMNELETEQ). Residues 657 to 728 (LRDYEEKLIV…SVKVPAAASD (72 aa)) are sufficient for interaction with AKTIP and VPS18. Phosphoserine is present on residues Ser-719 and Ser-727.

Belongs to the hook family. In terms of assembly, self-associates. Component of the FTS/Hook/FHIP complex (FHF complex), composed of AKTIP/FTS, FHIP1B, and one or more members of the Hook family of proteins HOOK1, HOOK2, and HOOK3. Interacts directly with AKTIP/FTS, HOOK2 and HOOK3. Associates with several subunits of the homotypic vesicular sorting complex (the HOPS complex) including VPS16, VPS18, VPS39 and VPS41; these interactions may be indirect. Interacts with CCDC181. Interacts (via coiled-coil region) with RIMBP3 (via C-terminus). Interacts with LRGUK (via guanylate kinase-like domain). Interacts with microtubules. May interacts with CLN3. Interacts with AP4M1; the interaction is direct, mediates the interaction between FTS-Hook-FHIP (FHF) complex and AP-4 and the perinuclear distribution of AP-4. In terms of tissue distribution, mainly expressed in testis.

The protein resides in the cytoplasm. It is found in the cytoskeleton. Functionally, component of the FTS/Hook/FHIP complex (FHF complex). The FHF complex may function to promote vesicle trafficking and/or fusion via the homotypic vesicular protein sorting complex (the HOPS complex). FHF complex promotes the distribution of AP-4 complex to the perinuclear area of the cell. Required for spermatid differentiation. Probably involved in the positioning of the microtubules of the manchette and the flagellum in relation to the membrane skeleton. The chain is Protein Hook homolog 1 (Hook1) from Mus musculus (Mouse).